Here is a 186-residue protein sequence, read N- to C-terminus: ADP-ribosylation factor-like protein 8A (186 aa).

Positions 1 to 19 (MLALFNKLLDWFKALFWKE) form an intramembrane region, note=Mediates targeting to membranes. GTP contacts are provided by residues 29–35 (QYSGKTT), 71–75 (DIGGQ), and 130–133 (NKRD).

Belongs to the small GTPase superfamily. Arf family.

The protein resides in the late endosome membrane. Its subcellular location is the lysosome membrane. Functionally, may play a role in lysosomes motility. Alternatively, may play a role in chromosome segregation. The polypeptide is ADP-ribosylation factor-like protein 8A (arl8a) (Xenopus tropicalis (Western clawed frog)).